A 242-amino-acid chain; its full sequence is Probable transcriptional regulatory protein STH1004 (242 aa).

This sequence belongs to the TACO1 family.

Its subcellular location is the cytoplasm. In Symbiobacterium thermophilum (strain DSM 24528 / JCM 14929 / IAM 14863 / T), this protein is Probable transcriptional regulatory protein STH1004.